Reading from the N-terminus, the 146-residue chain is Acidic phospholipase A2 S13-69J (146 aa).

Positions 1-19 are cleaved as a signal peptide; that stretch reads MYPAHLLVLLAVCVSLLGA. Residues 20–27 constitute a propeptide that is removed on maturation; sequence ASIPPQPL. Cystine bridges form between Cys-38–Cys-98, Cys-54–Cys-145, Cys-56–Cys-72, Cys-71–Cys-126, Cys-78–Cys-119, Cys-87–Cys-112, and Cys-105–Cys-117. Tyr-55, Gly-57, and Gly-59 together coordinate Ca(2+). His-75 is a catalytic residue. Position 76 (Asp-76) interacts with Ca(2+). Asp-120 is a catalytic residue.

This sequence belongs to the phospholipase A2 family. Group I subfamily. D49 sub-subfamily. Ca(2+) is required as a cofactor. As to expression, expressed by the venom gland.

The protein resides in the secreted. It catalyses the reaction a 1,2-diacyl-sn-glycero-3-phosphocholine + H2O = a 1-acyl-sn-glycero-3-phosphocholine + a fatty acid + H(+). In terms of biological role, snake venom phospholipase A2 (PLA2) that inhibits collagen-induced platelet aggregation. PLA2 catalyzes the calcium-dependent hydrolysis of the 2-acyl groups in 3-sn-phosphoglycerides. The sequence is that of Acidic phospholipase A2 S13-69J from Austrelaps superbus (Lowland copperhead snake).